The primary structure comprises 206 residues: dITP/XTP pyrophosphatase (206 aa).

10 to 15 (SGNAGK) contributes to the substrate binding site. Mg(2+) is bound by residues glutamate 40 and aspartate 69. Aspartate 69 functions as the Proton acceptor in the catalytic mechanism. Substrate contacts are provided by residues serine 70, 148 to 151 (FGYD), lysine 171, and 176 to 177 (HR).

Belongs to the HAM1 NTPase family. As to quaternary structure, homodimer. Requires Mg(2+) as cofactor.

The enzyme catalyses XTP + H2O = XMP + diphosphate + H(+). The catalysed reaction is dITP + H2O = dIMP + diphosphate + H(+). It catalyses the reaction ITP + H2O = IMP + diphosphate + H(+). Functionally, pyrophosphatase that catalyzes the hydrolysis of nucleoside triphosphates to their monophosphate derivatives, with a high preference for the non-canonical purine nucleotides XTP (xanthosine triphosphate), dITP (deoxyinosine triphosphate) and ITP. Seems to function as a house-cleaning enzyme that removes non-canonical purine nucleotides from the nucleotide pool, thus preventing their incorporation into DNA/RNA and avoiding chromosomal lesions. The protein is dITP/XTP pyrophosphatase of Synechococcus sp. (strain CC9311).